The chain runs to 298 residues: Probable phosphite transport system-binding protein HtxB (298 aa).

Residues 1-33 form the signal peptide; it reads MQVFTLFSKFKKALTRAILAFIATIIVCTPAQA.

This sequence belongs to the phosphate/phosphite/phosphonate binding protein family.

Its function is as follows. Probably forms part of a binding-protein-dependent hypophosphite transporter. In Stutzerimonas stutzeri (Pseudomonas stutzeri), this protein is Probable phosphite transport system-binding protein HtxB (htxB).